We begin with the raw amino-acid sequence, 1227 residues long: DNA-directed RNA polymerase subunit beta (1227 aa).

It belongs to the RNA polymerase beta chain family. The RNAP catalytic core consists of 2 alpha, 1 beta, 1 beta' and 1 omega subunit. When a sigma factor is associated with the core the holoenzyme is formed, which can initiate transcription.

The enzyme catalyses RNA(n) + a ribonucleoside 5'-triphosphate = RNA(n+1) + diphosphate. Its function is as follows. DNA-dependent RNA polymerase catalyzes the transcription of DNA into RNA using the four ribonucleoside triphosphates as substrates. In Chloroflexus aggregans (strain MD-66 / DSM 9485), this protein is DNA-directed RNA polymerase subunit beta.